The chain runs to 236 residues: 2,3,4,5-tetrahydropyridine-2,6-dicarboxylate N-acetyltransferase (236 aa).

The protein belongs to the transferase hexapeptide repeat family. DapH subfamily.

The enzyme catalyses (S)-2,3,4,5-tetrahydrodipicolinate + acetyl-CoA + H2O = L-2-acetamido-6-oxoheptanedioate + CoA. The protein operates within amino-acid biosynthesis; L-lysine biosynthesis via DAP pathway; LL-2,6-diaminopimelate from (S)-tetrahydrodipicolinate (acetylase route): step 1/3. Functionally, catalyzes the transfer of an acetyl group from acetyl-CoA to tetrahydrodipicolinate. The chain is 2,3,4,5-tetrahydropyridine-2,6-dicarboxylate N-acetyltransferase from Clostridium botulinum (strain Okra / Type B1).